Consider the following 240-residue polypeptide: Octanoyltransferase (240 aa).

Residues 31–216 (GQVGDTLLLL…HLCAVFDLEP (186 aa)) enclose the BPL/LPL catalytic domain. Substrate-binding positions include 76-83 (RGGGATYH), 145-147 (AIG), and 159-161 (GLA). Cys-177 functions as the Acyl-thioester intermediate in the catalytic mechanism.

The protein belongs to the LipB family.

It is found in the cytoplasm. The catalysed reaction is octanoyl-[ACP] + L-lysyl-[protein] = N(6)-octanoyl-L-lysyl-[protein] + holo-[ACP] + H(+). It functions in the pathway protein modification; protein lipoylation via endogenous pathway; protein N(6)-(lipoyl)lysine from octanoyl-[acyl-carrier-protein]: step 1/2. Functionally, catalyzes the transfer of endogenously produced octanoic acid from octanoyl-acyl-carrier-protein onto the lipoyl domains of lipoate-dependent enzymes. Lipoyl-ACP can also act as a substrate although octanoyl-ACP is likely to be the physiological substrate. The polypeptide is Octanoyltransferase (Roseiflexus sp. (strain RS-1)).